A 319-amino-acid polypeptide reads, in one-letter code: Cytochrome f (319 aa).

The N-terminal stretch at 1 to 34 is a signal peptide; sequence MQNRNTYEWAKKMTRLISVLVMIHIITRTSISNA. Heme contacts are provided by Tyr35, Cys55, Cys58, and His59. A helical transmembrane segment spans residues 287-304; it reads GLLLFLASVILAQIFLVL.

It belongs to the cytochrome f family. The 4 large subunits of the cytochrome b6-f complex are cytochrome b6, subunit IV (17 kDa polypeptide, petD), cytochrome f and the Rieske protein, while the 4 small subunits are PetG, PetL, PetM and PetN. The complex functions as a dimer. Requires heme as cofactor.

Its subcellular location is the plastid. It is found in the chloroplast thylakoid membrane. Its function is as follows. Component of the cytochrome b6-f complex, which mediates electron transfer between photosystem II (PSII) and photosystem I (PSI), cyclic electron flow around PSI, and state transitions. The protein is Cytochrome f (petA) of Pinus thunbergii (Japanese black pine).